The chain runs to 287 residues: Pyridoxal kinase PdxY (287 aa).

Residues serine 9 and 44–45 (MQ) contribute to the substrate site. 4 residues coordinate ATP: aspartate 111, alanine 142, glutamate 147, and lysine 180. A substrate-binding site is contributed by aspartate 221.

This sequence belongs to the pyridoxine kinase family. PdxY subfamily. Homodimer. Mg(2+) serves as cofactor.

It carries out the reaction pyridoxal + ATP = pyridoxal 5'-phosphate + ADP + H(+). It participates in cofactor metabolism; pyridoxal 5'-phosphate salvage; pyridoxal 5'-phosphate from pyridoxal: step 1/1. Its function is as follows. Pyridoxal kinase involved in the salvage pathway of pyridoxal 5'-phosphate (PLP). Catalyzes the phosphorylation of pyridoxal to PLP. This chain is Pyridoxal kinase PdxY, found in Burkholderia pseudomallei (strain K96243).